The primary structure comprises 299 residues: 4-hydroxy-tetrahydrodipicolinate synthase 2 (299 aa).

Threonine 54 contacts pyruvate. The Proton donor/acceptor role is filled by tyrosine 142. Residue lysine 170 is the Schiff-base intermediate with substrate of the active site. Residue valine 210 participates in pyruvate binding.

Belongs to the DapA family. In terms of assembly, homotetramer; dimer of dimers.

It localises to the cytoplasm. It carries out the reaction L-aspartate 4-semialdehyde + pyruvate = (2S,4S)-4-hydroxy-2,3,4,5-tetrahydrodipicolinate + H2O + H(+). It participates in amino-acid biosynthesis; L-lysine biosynthesis via DAP pathway; (S)-tetrahydrodipicolinate from L-aspartate: step 3/4. Functionally, catalyzes the condensation of (S)-aspartate-beta-semialdehyde [(S)-ASA] and pyruvate to 4-hydroxy-tetrahydrodipicolinate (HTPA). The polypeptide is 4-hydroxy-tetrahydrodipicolinate synthase 2 (Streptomyces coelicolor (strain ATCC BAA-471 / A3(2) / M145)).